The sequence spans 141 residues: Large ribosomal subunit protein uL11A (141 aa).

Belongs to the universal ribosomal protein uL11 family. Part of the ribosomal stalk of the 50S ribosomal subunit. Interacts with L10 and the large rRNA to form the base of the stalk. L10 forms an elongated spine to which L12 dimers bind in a sequential fashion forming a multimeric L10(L12)X complex. One or more lysine residues are methylated.

Forms part of the ribosomal stalk which helps the ribosome interact with GTP-bound translation factors. In Halalkalibacterium halodurans (strain ATCC BAA-125 / DSM 18197 / FERM 7344 / JCM 9153 / C-125) (Bacillus halodurans), this protein is Large ribosomal subunit protein uL11A.